The chain runs to 63 residues: Small ribosomal subunit protein bS21 (63 aa).

The protein belongs to the bacterial ribosomal protein bS21 family.

The polypeptide is Small ribosomal subunit protein bS21 (Bacteroides fragilis (strain ATCC 25285 / DSM 2151 / CCUG 4856 / JCM 11019 / LMG 10263 / NCTC 9343 / Onslow / VPI 2553 / EN-2)).